The following is an 832-amino-acid chain: MLIKLFGKIFKNSNDRALKVINLIVKKINSLESTIEKLTDQQLSSKTIEFKNRISDGDNLNNILPEAYAVVREASKRIFNMRHFDVQLMGGIVLNRRCIAEMSTGEGKTLTSVLPAYLHSLLGKGVHIVTVNDYLAKRDANNNKPLFEFLGITVGINLPGLNNIEKRNAYLADITYGTNNEYGFDYLRDNMIFNENEKVQRNLYFALVDEVDSILIDESRTPLIISGPIKSNSDIYYKINKLVPNLIKQEKEDSENFQGNGHFTIDEKSKQINMTERGLILVENLLIKNHLMNKNDSLYSSKNISLMHHFISALRAHKLFFKNVDYIVKNNEIIIVDEHTGRTMHGRRWSDGLHQAIEAKEKVNINNENQTLASITFQNYFRLYEKLSGMTGTAYTEAAEFKAIYKLDTIIIPTNRPVIRNDLPDLIYMTEKEKINAIINDIKNCYSKNIPVLVGTISIEKSENISNILKKLRIKHNVLNAKFHELEAEIISQAGCPKSITIATNMAGRGTDIILGGNWKSEFFNKKNINKKRIKKIKESWVKKNNYVIKLGGLHIIGTERHESRRIDNQLRGRSGRQGDPGSSRFYVSMEDNLMRIFASNRIIQTMQKLGMKTGESIEHKWITKAISNAQKKVENRNFDMRKQLLDYDDVANEQRKAIYSQRTEILNSLDIKDIIDNIRKDVLKKIFEKYKTKHSEKINVNLIKIENLIKKYFCIEISILSLYKENKCNLEKLYKNILIIILKKYNEKENKIGSTNLRIFEKNIMIKTLDSFWREHLSSIDYLRQGIHLRGYAQKDPKQEYKRESFIMFENMLYELKIEVITIISNVKIKS.

Residues glutamine 87, 105–109, and aspartate 512 each bind ATP; that span reads GEGKT.

The protein belongs to the SecA family. In terms of assembly, monomer and homodimer. Part of the essential Sec protein translocation apparatus which comprises SecA, SecYEG and auxiliary proteins SecDF-YajC and YidC.

It is found in the cell membrane. It localises to the cytoplasm. The enzyme catalyses ATP + H2O + cellular proteinSide 1 = ADP + phosphate + cellular proteinSide 2.. Functionally, part of the Sec protein translocase complex. Interacts with the SecYEG preprotein conducting channel. Has a central role in coupling the hydrolysis of ATP to the transfer of proteins into and across the cell membrane, serving as an ATP-driven molecular motor driving the stepwise translocation of polypeptide chains across the membrane. In Wigglesworthia glossinidia brevipalpis, this protein is Protein translocase subunit SecA.